The sequence spans 234 residues: Leucyl/phenylalanyl-tRNA--protein transferase (234 aa).

It belongs to the L/F-transferase family.

It localises to the cytoplasm. The enzyme catalyses N-terminal L-lysyl-[protein] + L-leucyl-tRNA(Leu) = N-terminal L-leucyl-L-lysyl-[protein] + tRNA(Leu) + H(+). It catalyses the reaction N-terminal L-arginyl-[protein] + L-leucyl-tRNA(Leu) = N-terminal L-leucyl-L-arginyl-[protein] + tRNA(Leu) + H(+). The catalysed reaction is L-phenylalanyl-tRNA(Phe) + an N-terminal L-alpha-aminoacyl-[protein] = an N-terminal L-phenylalanyl-L-alpha-aminoacyl-[protein] + tRNA(Phe). In terms of biological role, functions in the N-end rule pathway of protein degradation where it conjugates Leu, Phe and, less efficiently, Met from aminoacyl-tRNAs to the N-termini of proteins containing an N-terminal arginine or lysine. The polypeptide is Leucyl/phenylalanyl-tRNA--protein transferase (Shigella flexneri serotype 5b (strain 8401)).